A 228-amino-acid chain; its full sequence is Protein Iojap, chloroplastic (228 aa).

The segment at 1-54 is disordered; it reads MGGTSAAVPSHGLACAPPAAVTLNPRARRRRASSGSGGHRSSPQQPLRSDLLPP. The transit peptide at 1–62 directs the protein to the chloroplast; that stretch reads MGGTSAAVPS…PPATVACRAR (62 aa).

It belongs to the Iojap/RsfS family. As to quaternary structure, interacts with chloroplast ribosomal protein uL14c (rpl14).

Its subcellular location is the plastid. The protein localises to the chloroplast. Its function is as follows. May be a ribosome silencing factor (Potential). Involved in plastid biogenesis. Plastids affected by a mutation in Iojap lose the ability to perform translation and lack plastid ribosomes. This is Protein Iojap, chloroplastic (Ij) from Zea mays (Maize).